Reading from the N-terminus, the 119-residue chain is Protein TusC (119 aa).

Belongs to the DsrF/TusC family. As to quaternary structure, heterohexamer, formed by a dimer of trimers. The hexameric TusBCD complex contains 2 copies each of TusB, TusC and TusD. The TusBCD complex interacts with TusE.

The protein resides in the cytoplasm. In terms of biological role, part of a sulfur-relay system required for 2-thiolation of 5-methylaminomethyl-2-thiouridine (mnm(5)s(2)U) at tRNA wobble positions. The polypeptide is Protein TusC (Shigella dysenteriae serotype 1 (strain Sd197)).